Reading from the N-terminus, the 20-residue chain is Disintegrin (20 aa).

In terms of domain architecture, Disintegrin spans 1–20 (EAGEECDCGTPENPCCDAAT). Intrachain disulfides connect Cys6/Cys15 and Cys8/Cys16.

It belongs to the venom metalloproteinase (M12B) family. P-II subfamily. P-IIa sub-subfamily. As to quaternary structure, monomer. As to expression, expressed by the venom gland.

Its subcellular location is the secreted. Its function is as follows. Inhibits fibrinogen interaction with platelets. Acts by binding to alpha-IIb/beta-3 (ITGA2B/ITGB3) on the platelet surface and inhibits aggregation induced by ADP, thrombin, platelet-activating factor and collagen. The protein is Disintegrin of Bothrops fonsecai (Fonseca's lancehead).